Consider the following 161-residue polypeptide: pEARLI1-like lipid transfer protein 1 (161 aa).

The signal sequence occupies residues 1–25 (MASKNSASLALFFALNILFFTLTVA). Residues 32–39 (PSPKPKPV) form an A-1 repeat. A disordered region spans residues 32–76 (PSPKPKPVPSPKPKPVQCPPPPRPSVPSPNPRPVTPPRTPGSSGN). Residues 33 to 70 (SPKPKPVPSPKPKPVQCPPPPRPSVPSPNPRPVTPPRT) are compositionally biased toward pro residues. Residues 34 to 49 (PKPKPVPSPKPKPVQC) are 2 X 8 AA tandem repeats A of P-S-P-K-P-K-P-V. An A-2 repeat occupies 40–47 (PSPKPKPV).

The protein belongs to the plant LTP family. PEARLI1 subfamily. As to quaternary structure, self-interacts and binds to DIR1. Interacts with PDLP1.

Its subcellular location is the secreted. It is found in the cell wall. It localises to the endoplasmic reticulum. The protein resides in the cell junction. The protein localises to the plasmodesma. Its subcellular location is the plastid. It is found in the chloroplast. Functionally, probable lipid transfer protein (LTP). Seems to control the flowering process and lignin synthesis. Together with DIR1, required for glycerol-3-phosphate- (G3P) and azelaic acid- (AA) induced systemic acquired resistance (SAR). Component of plant systemic immunity involved in priming defenses in a AA-dependent manner, by modulating production and/or translocation of a mobile signal(s) during SAR. Confers resistance to Botrytis cinerea and Pseudomonas syringae pv. tomato DC3000 and PmaDG3. May be involved in induced systemic resistance (ISR) mediated by non-pathogenic bacteria (e.g. P. fluorescens GM30). Prevents electrolyte leakage during freezing damage. The sequence is that of pEARLI1-like lipid transfer protein 1 (AZI1) from Arabidopsis thaliana (Mouse-ear cress).